The primary structure comprises 78 residues: Gas vesicle protein A (78 aa).

Positions 9 to 19 (LAEVLDRVLDK) are alpha helix 1. Residues 23–31 (VDVWARISL) form a beta-strand 1 region. The tract at residues 32–34 (VGI) is beta turn. The segment at 35–43 (EILTVEARV) is beta-strand 2. Residues 48–67 (VDTFLHYAEEIAKIEQAELT) are alpha helix 2.

This sequence belongs to the gas vesicle GvpA family. The gas vesicle shell is 2 nm thick and consists of a single layer of this protein. It forms helical ribs nearly perpendicular to the long axis of the vesicle. Modeled as antiparallel homodimers.

Its subcellular location is the gas vesicle shell. In terms of biological role, gas vesicles are hollow, gas filled proteinaceous nanostructures found in some microorganisms. During planktonic growth they allow positioning of the organism at a favorable depth for light or nutrient acquisition. GvpA forms the protein shell. This gene replaces p-gvpA of H.salinarum very poorly, only about 1% of GVs are formed; the few gas vesicles formed are quite strong with a very high critical collapse pressure (CCP) of 0.213 MPa. Functionally, expression of a 9.5 kb mc-vac DNA fragment containing 2 divergently transcribed regions (gvpD-gvpE-gvpF-gvpG-gvpH-gvpI-gvpJ-gvpK-gvpL-gvpM and gvpA-gvpC-gvpN-gvpO) allows H.volcanii to produce gas vesicles. The protein is Gas vesicle protein A of Haloferax mediterranei (strain ATCC 33500 / DSM 1411 / JCM 8866 / NBRC 14739 / NCIMB 2177 / R-4) (Halobacterium mediterranei).